We begin with the raw amino-acid sequence, 505 residues long: Chemotaxis regulatory protein ChePep (505 aa).

Disordered regions lie at residues 154 to 403 (EPNN…EDIP) and 420 to 465 (EAVA…SSPL). Composition is skewed to basic and acidic residues over residues 172 to 263 (EEVK…EKTQ), 289 to 311 (ENKE…EVVT), 337 to 346 (QAHELEKQEI), 359 to 373 (QDKE…KEET), and 386 to 398 (PQEK…HYES). The span at 440 to 451 (TETSKNENNTET) shows a compositional bias: low complexity.

As to quaternary structure, interacts with CheZ; the interaction is essential for each other polar localization.

The protein resides in the cytoplasm. In terms of biological role, plays an essential role in chemotaxis. Regulates flagellar rotation through the formation of a complex with chemotaxis protein CheZ. Plays a major role in colonization of the stomach. This Helicobacter pylori (strain ATCC 700392 / 26695) (Campylobacter pylori) protein is Chemotaxis regulatory protein ChePep.